A 139-amino-acid polypeptide reads, in one-letter code: Small ribosomal subunit protein uS19 (139 aa).

The protein belongs to the universal ribosomal protein uS19 family.

Its function is as follows. Protein S19 forms a complex with S13 that binds strongly to the 16S ribosomal RNA. The protein is Small ribosomal subunit protein uS19 of Methanoregula boonei (strain DSM 21154 / JCM 14090 / 6A8).